Reading from the N-terminus, the 306-residue chain is Homoserine O-acetyltransferase (306 aa).

Residue C142 is the Acyl-thioester intermediate of the active site. Substrate-binding residues include K163 and S192. Catalysis depends on H235, which acts as the Proton acceptor. Residue E237 is part of the active site. A substrate-binding site is contributed by R249.

This sequence belongs to the MetA family.

Its subcellular location is the cytoplasm. The enzyme catalyses L-homoserine + acetyl-CoA = O-acetyl-L-homoserine + CoA. Its pathway is amino-acid biosynthesis; L-methionine biosynthesis via de novo pathway; O-acetyl-L-homoserine from L-homoserine: step 1/1. In terms of biological role, transfers an acetyl group from acetyl-CoA to L-homoserine, forming acetyl-L-homoserine. This is Homoserine O-acetyltransferase from Clostridium botulinum (strain Eklund 17B / Type B).